The chain runs to 396 residues: Digeranylgeranylglycerophospholipid reductase (396 aa).

The FAD site is built by Gly-14, Glu-33, Cys-44, Gly-45, Gly-47, Arg-100, Ala-124, Glu-162, Asp-283, Gly-295, and Ile-296. Lys-338 and Val-374 together coordinate a 2,3-bis-O-(geranylgeranyl)-sn-glycerol 1-phospholipid.

It belongs to the geranylgeranyl reductase family. DGGGPL reductase subfamily. FAD is required as a cofactor.

The catalysed reaction is 2,3-bis-O-(phytanyl)-sn-glycerol 1-phosphate + 8 NADP(+) = 2,3-bis-O-(geranylgeranyl)-sn-glycerol 1-phosphate + 8 NADPH + 8 H(+). The enzyme catalyses 2,3-bis-O-(phytanyl)-sn-glycerol 1-phosphate + 8 NAD(+) = 2,3-bis-O-(geranylgeranyl)-sn-glycerol 1-phosphate + 8 NADH + 8 H(+). It catalyses the reaction a 2,3-bis-O-phytanyl-sn-glycerol 1-phospholipid + 8 A = a 2,3-bis-O-(geranylgeranyl)-sn-glycerol 1-phospholipid + 8 AH2. It carries out the reaction CDP-2,3-bis-O-(geranylgeranyl)-sn-glycerol + 8 AH2 = CDP-2,3-bis-O-(phytanyl)-sn-glycerol + 8 A. The catalysed reaction is archaetidylserine + 8 AH2 = 2,3-bis-O-phytanyl-sn-glycero-3-phospho-L-serine + 8 A. Its pathway is membrane lipid metabolism; glycerophospholipid metabolism. In terms of biological role, is involved in the reduction of 2,3-digeranylgeranylglycerophospholipids (unsaturated archaeols) into 2,3-diphytanylglycerophospholipids (saturated archaeols) in the biosynthesis of archaeal membrane lipids. Catalyzes the formation of archaetidic acid (2,3-di-O-phytanyl-sn-glyceryl phosphate) from 2,3-di-O-geranylgeranylglyceryl phosphate (DGGGP) via the hydrogenation of each double bond of the isoprenoid chains. Is also probably able to reduce double bonds of geranyl groups in CDP-2,3-bis-O-(geranylgeranyl)-sn-glycerol and archaetidylserine, thus acting at various stages in the biosynthesis of archaeal membrane lipids. This Thermoplasma volcanium (strain ATCC 51530 / DSM 4299 / JCM 9571 / NBRC 15438 / GSS1) protein is Digeranylgeranylglycerophospholipid reductase.